Consider the following 317-residue polypeptide: Olfactory receptor 2F1 (317 aa).

Over 1–24 (MGTDNQTWVSEFILLGLSSDWDTR) the chain is Extracellular. N-linked (GlcNAc...) asparagine glycosylation is present at asparagine 5. Residues 25-48 (VSLFVLFLVMYVVTVLGNCLIVLL) form a helical membrane-spanning segment. At 49–57 (IRLDSRLHT) the chain is on the cytoplasmic side. A helical membrane pass occupies residues 58–79 (PMYFFLTNLSLVDVSYATSVVP). Residues 80–100 (QLLAHFLAEHKAIPFQSCAAQ) lie on the Extracellular side of the membrane. The cysteines at positions 97 and 189 are disulfide-linked. The helical transmembrane segment at 101–120 (LFFSLALGGIEFVLLAVMAY) threads the bilayer. The Cytoplasmic segment spans residues 121-139 (DRYVAVCDALRYSAIMHGG). Residues 140–160 (LCARLAITSWVSGFISSPVQT) form a helical membrane-spanning segment. The Extracellular segment spans residues 161–200 (AITFQLPMCRNKFIDHISCELLAVVRLACVDTSSNEVTIM). Residues 201 to 222 (VSSIVLLMTPFCLVLLSYIQII) traverse the membrane as a helical segment. At 223–236 (STILKIQSREGRKK) the chain is on the cytoplasmic side. Residues 237-261 (AFHTCASHLTVVALCYGVAIFTYIQ) traverse the membrane as a helical segment. The Extracellular segment spans residues 262–272 (PHSSPSVLQEK). The helical transmembrane segment at 273-292 (LFSVFYAILTPMLNPMIYSL) threads the bilayer. Over 293–317 (RNKEVKGAWQKLLWKFSGLTSKLAT) the chain is Cytoplasmic.

It belongs to the G-protein coupled receptor 1 family.

Its subcellular location is the cell membrane. Odorant receptor. This is Olfactory receptor 2F1 (OR2F1) from Homo sapiens (Human).